The chain runs to 187 residues: UPF0301 protein YqgE (187 aa).

It belongs to the UPF0301 (AlgH) family.

This chain is UPF0301 protein YqgE, found in Salmonella paratyphi A (strain ATCC 9150 / SARB42).